The chain runs to 289 residues: 4-hydroxybenzoate octaprenyltransferase (289 aa).

The next 9 helical transmembrane spans lie at 22-42 (AGWL…SHGF), 45-65 (WHLV…GCCI), 96-116 (LGLG…TNAV), 118-138 (IAWS…KRYV), 140-160 (MPQA…FAAV), 164-184 (VPPL…AYDT), 211-231 (VAGV…ALIQ), 236-256 (AIFM…GWLI), and 267-287 (AFRL…LSYW).

It belongs to the UbiA prenyltransferase family. Mg(2+) is required as a cofactor.

Its subcellular location is the cell inner membrane. The catalysed reaction is all-trans-octaprenyl diphosphate + 4-hydroxybenzoate = 4-hydroxy-3-(all-trans-octaprenyl)benzoate + diphosphate. The protein operates within cofactor biosynthesis; ubiquinone biosynthesis. In terms of biological role, catalyzes the prenylation of para-hydroxybenzoate (PHB) with an all-trans polyprenyl group. Mediates the second step in the final reaction sequence of ubiquinone-8 (UQ-8) biosynthesis, which is the condensation of the polyisoprenoid side chain with PHB, generating the first membrane-bound Q intermediate 3-octaprenyl-4-hydroxybenzoate. The polypeptide is 4-hydroxybenzoate octaprenyltransferase (Polaromonas naphthalenivorans (strain CJ2)).